Here is a 368-residue protein sequence, read N- to C-terminus: 4-hydroxy-3-methylbut-2-en-1-yl diphosphate synthase (flavodoxin) (368 aa).

Cys271, Cys274, Cys306, and Glu313 together coordinate [4Fe-4S] cluster.

The protein belongs to the IspG family. The cofactor is [4Fe-4S] cluster.

It catalyses the reaction (2E)-4-hydroxy-3-methylbut-2-enyl diphosphate + oxidized [flavodoxin] + H2O + 2 H(+) = 2-C-methyl-D-erythritol 2,4-cyclic diphosphate + reduced [flavodoxin]. The protein operates within isoprenoid biosynthesis; isopentenyl diphosphate biosynthesis via DXP pathway; isopentenyl diphosphate from 1-deoxy-D-xylulose 5-phosphate: step 5/6. Its function is as follows. Converts 2C-methyl-D-erythritol 2,4-cyclodiphosphate (ME-2,4cPP) into 1-hydroxy-2-methyl-2-(E)-butenyl 4-diphosphate. This chain is 4-hydroxy-3-methylbut-2-en-1-yl diphosphate synthase (flavodoxin), found in Haemophilus influenzae (strain PittGG).